Here is a 624-residue protein sequence, read N- to C-terminus: Leucine-rich repeat and IQ domain-containing protein 3 (624 aa).

LRR repeat units follow at residues 51–72, 73–94, and 98–119; these read SLRV…QSCI, KLIK…KFWN, and NLKL…CVLS. Residues 132–179 form the LRRCT domain; the sequence is CPVSLKKGYRHVLVNSIWPLKALDHHVISDEEIIQNWHLPERFKACNH. The region spanning 215–244 is the IQ domain; sequence HNSPVLIVQRWIRGFLVRKNLSPVFFHKKK. A coiled-coil region spans residues 553-614; sequence KQKLKAEKYR…TKVAIVKTNL (62 aa).

This Homo sapiens (Human) protein is Leucine-rich repeat and IQ domain-containing protein 3 (LRRIQ3).